Consider the following 206-residue polypeptide: Holliday junction branch migration complex subunit RuvA (206 aa).

The segment at 1 to 64 is domain I; sequence MIGKLKGTVD…EDQIRLFGFV (64 aa). Residues 65–143 are domain II; that stretch reads TEAEREWFRL…AFTAADPGLA (79 aa). A flexible linker region spans residues 144–154; that stretch reads RLAADVEATEA. The tract at residues 154–206 is domain III; it reads AAGGALADAVSALVNLGYGQAQAHTAIAAAGRKAGEDATTETLIRLGLKELAK.

It belongs to the RuvA family. In terms of assembly, homotetramer. Forms an RuvA(8)-RuvB(12)-Holliday junction (HJ) complex. HJ DNA is sandwiched between 2 RuvA tetramers; dsDNA enters through RuvA and exits via RuvB. An RuvB hexamer assembles on each DNA strand where it exits the tetramer. Each RuvB hexamer is contacted by two RuvA subunits (via domain III) on 2 adjacent RuvB subunits; this complex drives branch migration. In the full resolvosome a probable DNA-RuvA(4)-RuvB(12)-RuvC(2) complex forms which resolves the HJ.

The protein localises to the cytoplasm. Functionally, the RuvA-RuvB-RuvC complex processes Holliday junction (HJ) DNA during genetic recombination and DNA repair, while the RuvA-RuvB complex plays an important role in the rescue of blocked DNA replication forks via replication fork reversal (RFR). RuvA specifically binds to HJ cruciform DNA, conferring on it an open structure. The RuvB hexamer acts as an ATP-dependent pump, pulling dsDNA into and through the RuvAB complex. HJ branch migration allows RuvC to scan DNA until it finds its consensus sequence, where it cleaves and resolves the cruciform DNA. This chain is Holliday junction branch migration complex subunit RuvA, found in Azorhizobium caulinodans (strain ATCC 43989 / DSM 5975 / JCM 20966 / LMG 6465 / NBRC 14845 / NCIMB 13405 / ORS 571).